The primary structure comprises 264 residues: E3 ubiquitin-protein ligase MARCHF8 (264 aa).

Residues 15-47 (LGHSVSRSSNISKAGSPTSVSAPSRFPRTSVTP) form a disordered region. Over residues 16–47 (GHSVSRSSNISKAGSPTSVSAPSRFPRTSVTP) the composition is skewed to polar residues. The RING-CH-type zinc-finger motif lies at 45–106 (VTPSSQDICR…ELCKFEFIME (62 aa)). Positions 53, 56, 70, 72, 80, 83, 96, and 99 each coordinate Zn(2+). A run of 2 helical transmembrane segments spans residues 130 to 150 (CSVTFHVIAITCVVWSLYVLI) and 170 to 190 (FWTKLVVVAIGFTGGLLFMYV).

The protein localises to the cytoplasmic vesicle membrane. It is found in the lysosome membrane. Its subcellular location is the early endosome membrane. The enzyme catalyses S-ubiquitinyl-[E2 ubiquitin-conjugating enzyme]-L-cysteine + [acceptor protein]-L-lysine = [E2 ubiquitin-conjugating enzyme]-L-cysteine + N(6)-ubiquitinyl-[acceptor protein]-L-lysine.. The protein operates within protein modification; protein ubiquitination. E3 ubiquitin-protein ligase that mediates ubiquitination of cd86 and MHC class II proteins, such as hla-dr alpha and beta, and promotes their subsequent endocytosis and sorting to lysosomes via multivesicular bodies. The protein is E3 ubiquitin-protein ligase MARCHF8 (marchf8) of Xenopus laevis (African clawed frog).